The chain runs to 103 residues: Cell division protein FtsB (103 aa).

The Cytoplasmic portion of the chain corresponds to 1 to 3 (MGK). A helical transmembrane segment spans residues 4–21 (LTLLLLALLVWLQYSLWF). The Periplasmic segment spans residues 22–103 (GKNGIHDYSR…RAQTAGQNNR (82 aa)). Residues 33 to 62 (NDDVVAQQATNAKLKARNDQLFAEIDDLNG) are a coiled coil.

It belongs to the FtsB family. As to quaternary structure, part of a complex composed of FtsB, FtsL and FtsQ.

The protein resides in the cell inner membrane. In terms of biological role, essential cell division protein. May link together the upstream cell division proteins, which are predominantly cytoplasmic, with the downstream cell division proteins, which are predominantly periplasmic. The chain is Cell division protein FtsB from Salmonella arizonae (strain ATCC BAA-731 / CDC346-86 / RSK2980).